We begin with the raw amino-acid sequence, 95 residues long: Co-chaperonin GroES (95 aa).

Belongs to the GroES chaperonin family. As to quaternary structure, heptamer of 7 subunits arranged in a ring. Interacts with the chaperonin GroEL.

The protein resides in the cytoplasm. Its function is as follows. Together with the chaperonin GroEL, plays an essential role in assisting protein folding. The GroEL-GroES system forms a nano-cage that allows encapsulation of the non-native substrate proteins and provides a physical environment optimized to promote and accelerate protein folding. GroES binds to the apical surface of the GroEL ring, thereby capping the opening of the GroEL channel. The protein is Co-chaperonin GroES of Pseudoalteromonas translucida (strain TAC 125).